A 557-amino-acid chain; its full sequence is Nucleoporin AMO1 (557 aa).

Residues 1–25 (MTVCRFWQQGYCRNGNACKFEHPPK) form a C3H1-type zinc finger. Positions 114–141 (QGALNEIQAAYQAAQQQIQNTLQNIPAA) form a coiled coil. The interval 161-297 (ESSKGSSTGG…SALGPKPGAF (137 aa)) is disordered. 10 SXFG repeats span residues 171-174 (SVFG), 200-203 (SAFG), 213-216 (SAFG), 228-231 (SAFG), 240-243 (SAFG), 249-252 (STFG), 262-265 (SAFG), 282-285 (SAFG), 303-306 (SAFG), and 314-317 (SPFG). A compositionally biased stretch (polar residues) spans 195 to 215 (STPSTSAFGQPSPLGQKSSAF). The segment covering 243–253 (GSPQTGSTFGQ) has biased composition (polar residues). A disordered region spans residues 315 to 463 (PFGAAAQATQ…DLLSYATKNP (149 aa)). 2 stretches are compositionally biased toward polar residues: residues 321 to 338 (QATQ…QAAN) and 351 to 366 (GQPS…GQPS). 4 SXFG repeats span residues 348-351 (SAFG), 370-373 (SAFG), 387-390 (SLFG), and 407-410 (SAFG). A compositionally biased stretch (low complexity) spans 367 to 385 (TQSSAFGQQQPQQAGTFGS). The span at 388–429 (LFGQQQQQPSNVFGQPSTTSAFGSQAATSGFSQLGNATSTIG) shows a compositional bias: polar residues. Over residues 430 to 443 (ASPAGAQAPASKSP) the composition is skewed to low complexity.

The nuclear pore complex (NPC) constitutes the exclusive means of nucleocytoplasmic transport. NPCs allow the passive diffusion of ions and small molecules and the active, nuclear transport receptor-mediated bidirectional transport of macromolecules such as proteins, RNAs, ribonucleoparticles (RNPs), and ribosomal subunits across the nuclear envelope. The 55-60 MDa NPC is composed of at least 28 different subunits: AMO1, ELYS, GLE1, GLE2, MLP1, NDC1, NIC96, NSP1, NUP133, NUP145, NUP152, NUP159, NUP170, NUP188, NUP192, NUP37, NUP49, NUP53, NUP56, NUP57, NUP82, NUP84, NUP85, POM152, POM33, POM34, SEC13 and SEH1. Due to its 8-fold rotational symmetry, all subunits are present with 8 copies or multiples thereof.

Its subcellular location is the nucleus. The protein resides in the nuclear pore complex. It localises to the nucleus membrane. Functions as a component of the nuclear pore complex (NPC). NPC components, collectively referred to as nucleoporins (NUPs), can play the role of both NPC structural components and of docking or interaction partners for transiently associated nuclear transport factors. Active directional transport is assured by both, a Phe-Gly (FG) repeat affinity gradient for these transport factors across the NPC and a transport cofactor concentration gradient across the nuclear envelope (GSP1 and GSP2 GTPases associated predominantly with GTP in the nucleus, with GDP in the cytoplasm). AMO1 is specifically important for nuclear protein and mRNA export. The chain is Nucleoporin AMO1 (AMO1) from Chaetomium thermophilum (strain DSM 1495 / CBS 144.50 / IMI 039719) (Thermochaetoides thermophila).